A 156-amino-acid polypeptide reads, in one-letter code: Lipoprotein signal peptidase (156 aa).

A helical transmembrane segment spans residues 62 to 82 (GNTVFMVLSAVIIAILSYTKI). Catalysis depends on residues D115 and D133. The chain crosses the membrane as a helical span at residues 126–146 (WPAFNLADLTITCGVIVFLAM).

The protein belongs to the peptidase A8 family.

The protein localises to the cell inner membrane. The catalysed reaction is Release of signal peptides from bacterial membrane prolipoproteins. Hydrolyzes -Xaa-Yaa-Zaa-|-(S,diacylglyceryl)Cys-, in which Xaa is hydrophobic (preferably Leu), and Yaa (Ala or Ser) and Zaa (Gly or Ala) have small, neutral side chains.. Its pathway is protein modification; lipoprotein biosynthesis (signal peptide cleavage). Its function is as follows. This protein specifically catalyzes the removal of signal peptides from prolipoproteins. This Anaplasma phagocytophilum (strain HZ) protein is Lipoprotein signal peptidase.